Here is a 215-residue protein sequence, read N- to C-terminus: Protein C' (215 aa).

The tract at residues 12-34 is disordered; that stretch reads MPSFLKKILKLRGRRQEDESRSR. The tract at residues 15–22 is involved in self-degradation and in host STAT1 degradation; sequence FLKKILKL.

The protein belongs to the respirovirus protein C family. The different isoforms interact (via C-terminus) with unphosphorylated and phosphorylated human STAT1 (via N-terminus), favoring the formation of parallel STAT1 homodimers. The different isoforms do not interact with host STAT2. C protein interacts with L protein; this interaction has an inhibitory effect on viral transcription and replication. Post-translationally, protein Y2 is produced not only by alternative initiation, but also by proteolytic cleavage of C'. Only alternative initiation is detected in vitro, whereas in vivo cleavage seems to be predominant.

It is found in the host cytoplasm. Functionally, the different products prevent the establishment of cellular antiviral state by blocking the interferon-alpha/beta (IFN-alpha/beta) and IFN-gamma signaling pathways. They inhibit IFN-alpha/beta induced tyrosine phosphorylation of STAT1 and STAT2. Blocking the IFN-alpha/beta pathway requires binding to STAT1 in the cytoplasm. They inhibit IFN-gamma induced serine phosphorylation of STAT1. Block the IFN-gamma pathway by binding to and stabilizing the parallel form of the STAT1 dimer, further inducing high-molecular-weight complex formation and inhibition of transcription by IFN-gamma. May also have a role in preventing the cell to enter apoptosis. Modulate regulation of viral transcription and replication. Overexpression inhibits the viral RNA polymerase. The absence of all C', C and Y2 proteins leads to viral delayed growth. Plays an important role in virion particles release. Modulates virion shape. The sequence is that of Protein C' (P/V/C) from Cavia cutleri (Guinea pig).